Here is an 864-residue protein sequence, read N- to C-terminus: DNA mismatch repair protein MutS (864 aa).

Position 623–630 (623–630 (GPNMGGKS)) interacts with ATP.

This sequence belongs to the DNA mismatch repair MutS family.

Its function is as follows. This protein is involved in the repair of mismatches in DNA. It is possible that it carries out the mismatch recognition step. This protein has a weak ATPase activity. This chain is DNA mismatch repair protein MutS, found in Polaromonas sp. (strain JS666 / ATCC BAA-500).